The chain runs to 420 residues: uncharacterized protein (420 aa).

Disordered stretches follow at residues 84–103 and 122–211; these read RSQANSESTPPEHTWSGTSE and SMNN…NKKS. Residues 85-103 are compositionally biased toward polar residues; it reads SQANSESTPPEHTWSGTSE. Over residues 184 to 199 the composition is skewed to basic and acidic residues; sequence SMTDQEVEQRRKEANK. 2 coiled-coil regions span residues 265–310 and 345–374; these read TEKE…TATN and LQFKIKKFERREKLLEEVENQIKQYFNFKE. A compositionally biased stretch (polar residues) spans 399–408; that stretch reads KTSSPKTSIA. The tract at residues 399–420 is disordered; that stretch reads KTSSPKTSIAGSHRRSTRSSEN. Residues 410–420 show a composition bias toward basic residues; it reads SHRRSTRSSEN.

This is an uncharacterized protein from Caenorhabditis elegans.